The chain runs to 207 residues: Fibroblast growth factor 18 (207 aa).

The signal sequence occupies residues 1 to 27 (MYSAPSTCTCLCLHFLLLCFQVQVLAA). Asn39 is a glycosylation site (N-linked (GlcNAc...) asparagine). A disulfide bridge connects residues Cys109 and Cys127. Asn137 carries an N-linked (GlcNAc...) asparagine glycan.

Belongs to the heparin-binding growth factors family. Interacts with FGFR3 and FGFR4.

It is found in the secreted. Functionally, plays an important role in the regulation of cell proliferation, cell differentiation and cell migration. Required for normal ossification and bone development. Stimulates hepatic and intestinal proliferation. The polypeptide is Fibroblast growth factor 18 (FGF18) (Bos taurus (Bovine)).